We begin with the raw amino-acid sequence, 193 residues long: Holliday junction branch migration complex subunit RuvA (193 aa).

The tract at residues 1-64 is domain I; the sequence is MIGRIAGTLI…EDAHLLYGFG (64 aa). Positions 65-143 are domain II; the sequence is TAAERETFRQ…ADLGTVPGGP (79 aa). Residues 144-151 are flexible linker; that stretch reads AVSDDAVD. Residues 151–193 are domain III; that stretch reads DVLNALLALGYSDKEAALAIKQVPAGTGVSEGIKLALKALSKG.

It belongs to the RuvA family. Homotetramer. Forms an RuvA(8)-RuvB(12)-Holliday junction (HJ) complex. HJ DNA is sandwiched between 2 RuvA tetramers; dsDNA enters through RuvA and exits via RuvB. An RuvB hexamer assembles on each DNA strand where it exits the tetramer. Each RuvB hexamer is contacted by two RuvA subunits (via domain III) on 2 adjacent RuvB subunits; this complex drives branch migration. In the full resolvosome a probable DNA-RuvA(4)-RuvB(12)-RuvC(2) complex forms which resolves the HJ.

Its subcellular location is the cytoplasm. The RuvA-RuvB-RuvC complex processes Holliday junction (HJ) DNA during genetic recombination and DNA repair, while the RuvA-RuvB complex plays an important role in the rescue of blocked DNA replication forks via replication fork reversal (RFR). RuvA specifically binds to HJ cruciform DNA, conferring on it an open structure. The RuvB hexamer acts as an ATP-dependent pump, pulling dsDNA into and through the RuvAB complex. HJ branch migration allows RuvC to scan DNA until it finds its consensus sequence, where it cleaves and resolves the cruciform DNA. The chain is Holliday junction branch migration complex subunit RuvA from Ralstonia pickettii (strain 12J).